The following is an 818-amino-acid chain: Dipeptidyl aminopeptidase B (818 aa).

Residues methionine 1 to arginine 29 are Cytoplasmic-facing. The helical; Signal-anchor for type II membrane protein transmembrane segment at valine 30–leucine 45 threads the bilayer. At lysine 46–lysine 818 the chain is on the lumenal side. Asparagine 63, asparagine 79, asparagine 110, asparagine 139, asparagine 372, asparagine 392, and asparagine 421 each carry an N-linked (GlcNAc...) asparagine glycan. Serine 679 (charge relay system) is an active-site residue. An N-linked (GlcNAc...) asparagine glycan is attached at asparagine 738. Catalysis depends on charge relay system residues aspartate 756 and histidine 789.

It belongs to the peptidase S9B family.

The protein localises to the vacuole membrane. This Saccharomyces cerevisiae (strain ATCC 204508 / S288c) (Baker's yeast) protein is Dipeptidyl aminopeptidase B (DAP2).